Reading from the N-terminus, the 457-residue chain is uncharacterized protein (457 aa).

12 consecutive transmembrane segments (helical) span residues 18–38 (VMTV…PYLV), 44–64 (GAYV…MILV), 101–121 (MGLL…GWVI), 158–178 (IIFY…KGII), 188–208 (LMPL…TLPG), 228–248 (LFIF…GVLI), 273–293 (IIAV…GIEP), 294–314 (NAGP…LWAG), 316–336 (FFAI…SITI), 355–375 (AIVL…ILGD), 396–416 (SGNI…GFVL), and 433–453 (IKIW…VIFI).

It belongs to the sodium:neurotransmitter symporter (SNF) (TC 2.A.22) family.

Its subcellular location is the cell membrane. Putative sodium-dependent transporter. This is an uncharacterized protein from Haemophilus influenzae (strain ATCC 51907 / DSM 11121 / KW20 / Rd).